The chain runs to 283 residues: 4-diphosphocytidyl-2-C-methyl-D-erythritol kinase (283 aa).

Residue lysine 10 is part of the active site. 99-109 (PMGGGLGGGSS) serves as a coordination point for ATP. Aspartate 141 is an active-site residue.

This sequence belongs to the GHMP kinase family. IspE subfamily. In terms of assembly, homodimer.

It catalyses the reaction 4-CDP-2-C-methyl-D-erythritol + ATP = 4-CDP-2-C-methyl-D-erythritol 2-phosphate + ADP + H(+). The protein operates within isoprenoid biosynthesis; isopentenyl diphosphate biosynthesis via DXP pathway; isopentenyl diphosphate from 1-deoxy-D-xylulose 5-phosphate: step 3/6. In terms of biological role, catalyzes the phosphorylation of the position 2 hydroxy group of 4-diphosphocytidyl-2C-methyl-D-erythritol. In Shigella dysenteriae serotype 1 (strain Sd197), this protein is 4-diphosphocytidyl-2-C-methyl-D-erythritol kinase.